Reading from the N-terminus, the 537-residue chain is Probable protein kinase UbiB (537 aa).

The helical transmembrane segment at 30 to 47 threads the bilayer; sequence LLPWWLRALGYLLPWRWL. The 365-residue stretch at 126–490 folds into the Protein kinase domain; sequence RFDSEPLASA…KRERHDHHLL (365 aa). ATP contacts are provided by residues 132–140 and lysine 154; that span reads LASASVAQV. Residue aspartate 289 is the Proton acceptor of the active site. Transmembrane regions (helical) follow at residues 489–507 and 513–530; these read LLRLLGAALLAGGVLLALQ and ANAWPSWLMLASGLYLLV.

Belongs to the ABC1 family. UbiB subfamily.

The protein resides in the cell inner membrane. Its pathway is cofactor biosynthesis; ubiquinone biosynthesis [regulation]. Its function is as follows. Is probably a protein kinase regulator of UbiI activity which is involved in aerobic coenzyme Q (ubiquinone) biosynthesis. In Azotobacter vinelandii (strain DJ / ATCC BAA-1303), this protein is Probable protein kinase UbiB.